Reading from the N-terminus, the 347-residue chain is Ribosomal RNA small subunit methyltransferase C (347 aa).

This sequence belongs to the methyltransferase superfamily. RsmC family. Monomer.

The protein resides in the cytoplasm. The catalysed reaction is guanosine(1207) in 16S rRNA + S-adenosyl-L-methionine = N(2)-methylguanosine(1207) in 16S rRNA + S-adenosyl-L-homocysteine + H(+). In terms of biological role, specifically methylates the guanine in position 1207 of 16S rRNA in the 30S particle. The sequence is that of Ribosomal RNA small subunit methyltransferase C from Yersinia pseudotuberculosis serotype O:1b (strain IP 31758).